Reading from the N-terminus, the 348-residue chain is S-adenosylmethionine:tRNA ribosyltransferase-isomerase (348 aa).

This sequence belongs to the QueA family. As to quaternary structure, monomer.

It is found in the cytoplasm. It carries out the reaction 7-aminomethyl-7-carbaguanosine(34) in tRNA + S-adenosyl-L-methionine = epoxyqueuosine(34) in tRNA + adenine + L-methionine + 2 H(+). Its pathway is tRNA modification; tRNA-queuosine biosynthesis. Functionally, transfers and isomerizes the ribose moiety from AdoMet to the 7-aminomethyl group of 7-deazaguanine (preQ1-tRNA) to give epoxyqueuosine (oQ-tRNA). The polypeptide is S-adenosylmethionine:tRNA ribosyltransferase-isomerase (Polynucleobacter necessarius subsp. necessarius (strain STIR1)).